The primary structure comprises 235 residues: Glucosamine-6-phosphate deaminase (235 aa).

The active-site Proton acceptor; for enolization step is Asp62. Asn128 functions as the For ring-opening step in the catalytic mechanism. His130 functions as the Proton acceptor; for ring-opening step in the catalytic mechanism. The active-site For ring-opening step is Glu135.

The protein belongs to the glucosamine/galactosamine-6-phosphate isomerase family. NagB subfamily.

It carries out the reaction alpha-D-glucosamine 6-phosphate + H2O = beta-D-fructose 6-phosphate + NH4(+). The protein operates within amino-sugar metabolism; N-acetylneuraminate degradation; D-fructose 6-phosphate from N-acetylneuraminate: step 5/5. Functionally, catalyzes the reversible isomerization-deamination of glucosamine 6-phosphate (GlcN6P) to form fructose 6-phosphate (Fru6P) and ammonium ion. The chain is Glucosamine-6-phosphate deaminase from Streptococcus gordonii (strain Challis / ATCC 35105 / BCRC 15272 / CH1 / DL1 / V288).